Reading from the N-terminus, the 464-residue chain is Cell division protein FtsA (464 aa).

The disordered stretch occupies residues 392-464; sequence EVIETDKDTE…FKKLMKSLFE (73 aa). Over residues 416–455 the composition is skewed to basic and acidic residues; sequence KKENDEVAPEAPREESYEDRENHLEDEQQTEGKAKEESKF.

This sequence belongs to the FtsA/MreB family. In terms of assembly, self-interacts. Interacts with FtsZ.

It is found in the cell membrane. Its function is as follows. Cell division protein that is involved in the assembly of the Z ring. May serve as a membrane anchor for the Z ring. This Staphylococcus epidermidis (strain ATCC 12228 / FDA PCI 1200) protein is Cell division protein FtsA.